A 348-amino-acid polypeptide reads, in one-letter code: Maintenance of mitochondrial morphology protein 1 (348 aa).

The Lumenal portion of the chain corresponds to 1 to 35 (MAGKADLGHTGISDNIVERQIFVPQPNNAWSFTQG). The chain crosses the membrane as a helical span at residues 36 to 56 (LMCGQASVVVVLLVFIKFFVF). Topologically, residues 57–348 (SEAPPSSGAA…GKTEKVNGNE (292 aa)) are cytoplasmic. One can recognise an SMP-LTD domain in the interval 114–323 (NPESLDWFNV…EPKFQVVRLP (210 aa)). Residues 328–348 (RSKNTREPVGAGKTEKVNGNE) are disordered.

This sequence belongs to the MMM1 family. Homodimer. Component of the ER-mitochondria encounter structure (ERMES) or MDM complex, composed of MMM1, MDM10, MDM12 and MDM34. An MMM1 homodimer associates with one molecule of MDM12 on each side in a pairwise head-to-tail manner, and the SMP-LTD domains of MMM1 and MDM12 generate a continuous hydrophobic tunnel for phospholipid trafficking.

The protein localises to the endoplasmic reticulum membrane. Component of the ERMES/MDM complex, which serves as a molecular tether to connect the endoplasmic reticulum (ER) and mitochondria. Components of this complex are involved in the control of mitochondrial shape and protein biogenesis, and function in nonvesicular lipid trafficking between the ER and mitochondria. The MDM12-MMM1 subcomplex functions in the major beta-barrel assembly pathway that is responsible for biogenesis of all outer membrane beta-barrel proteins, and acts in a late step after the SAM complex. The MDM10-MDM12-MMM1 subcomplex further acts in the TOM40-specific pathway after the action of the MDM12-MMM1 complex. Essential for establishing and maintaining the structure of mitochondria and maintenance of mtDNA nucleoids. In Clavispora lusitaniae (strain ATCC 42720) (Yeast), this protein is Maintenance of mitochondrial morphology protein 1.